Reading from the N-terminus, the 47-residue chain is Light-harvesting protein B800/850/890 alpha-2 chain (47 aa).

Over 1–12 the chain is Cytoplasmic; the sequence is MWRMWKILDYRR. The chain crosses the membrane as a helical span at residues 13–33; the sequence is TVVLAHVGMAVLALLIHFILL. Residue histidine 29 participates in a bacteriochlorophyll binding. Residues 34-47 lie on the Periplasmic side of the membrane; that stretch reads STESFNWLEGNPYG.

This sequence belongs to the antenna complex alpha subunit family. In terms of assembly, the core complex is formed by different alpha and beta chains, binding bacteriochlorophyll molecules, and arranged most probably in tetrameric structures disposed around the reaction center. The non-pigmented gamma chains may constitute additional components.

It is found in the cell inner membrane. Antenna complexes are light-harvesting systems, which transfer the excitation energy to the reaction centers. The chain is Light-harvesting protein B800/850/890 alpha-2 chain from Halorhodospira halophila (strain DSM 244 / SL1) (Ectothiorhodospira halophila (strain DSM 244 / SL1)).